The primary structure comprises 444 residues: 3-phosphoshikimate 1-carboxyvinyltransferase (444 aa).

Residues Lys-24, Ser-25, and Arg-29 each contribute to the 3-phosphoshikimate site. Lys-24 contacts phosphoenolpyruvate. Phosphoenolpyruvate contacts are provided by Gly-97 and Arg-125. 3-phosphoshikimate contacts are provided by Ser-170, Gln-172, Asp-318, and Lys-345. Gln-172 lines the phosphoenolpyruvate pocket. The Proton acceptor role is filled by Asp-318. 2 residues coordinate phosphoenolpyruvate: Arg-349 and Arg-391.

It belongs to the EPSP synthase family. As to quaternary structure, monomer.

The protein resides in the cytoplasm. It carries out the reaction 3-phosphoshikimate + phosphoenolpyruvate = 5-O-(1-carboxyvinyl)-3-phosphoshikimate + phosphate. It functions in the pathway metabolic intermediate biosynthesis; chorismate biosynthesis; chorismate from D-erythrose 4-phosphate and phosphoenolpyruvate: step 6/7. Its function is as follows. Catalyzes the transfer of the enolpyruvyl moiety of phosphoenolpyruvate (PEP) to the 5-hydroxyl of shikimate-3-phosphate (S3P) to produce enolpyruvyl shikimate-3-phosphate and inorganic phosphate. This Halorhodospira halophila (strain DSM 244 / SL1) (Ectothiorhodospira halophila (strain DSM 244 / SL1)) protein is 3-phosphoshikimate 1-carboxyvinyltransferase.